The primary structure comprises 437 residues: Protein translocase subunit SecY (437 aa).

The next 10 membrane-spanning stretches (helical) occupy residues 19–39, 69–89, 122–142, 157–177, 189–209, 219–239, 275–295, 318–338, 378–398, and 400–420; these read LFTL…IPGV, LLQI…SIIL, VALA…GALF, IFTT…VMWL, GMSI…LWAI, WIEF…VVFV, GVIP…IVQF, HIIL…AISF, GSLY…GFGA, and QNFP…LETV.

The protein belongs to the SecY/SEC61-alpha family. As to quaternary structure, component of the Sec protein translocase complex. Heterotrimer consisting of SecY, SecE and SecG subunits. The heterotrimers can form oligomers, although 1 heterotrimer is thought to be able to translocate proteins. Interacts with the ribosome. Interacts with SecDF, and other proteins may be involved. Interacts with SecA.

The protein localises to the cell membrane. Functionally, the central subunit of the protein translocation channel SecYEG. Consists of two halves formed by TMs 1-5 and 6-10. These two domains form a lateral gate at the front which open onto the bilayer between TMs 2 and 7, and are clamped together by SecE at the back. The channel is closed by both a pore ring composed of hydrophobic SecY resides and a short helix (helix 2A) on the extracellular side of the membrane which forms a plug. The plug probably moves laterally to allow the channel to open. The ring and the pore may move independently. In Streptomyces lividans, this protein is Protein translocase subunit SecY.